Here is a 272-residue protein sequence, read N- to C-terminus: 4-hydroxy-tetrahydrodipicolinate reductase (272 aa).

Residues 10 to 15, Glu36, 100 to 102, and 124 to 127 contribute to the NAD(+) site; these read GAGGRM, GTT, and SGNM. The Proton donor/acceptor role is filled by His157. His158 provides a ligand contact to (S)-2,3,4,5-tetrahydrodipicolinate. Catalysis depends on Lys161, which acts as the Proton donor. Residue 167-168 participates in (S)-2,3,4,5-tetrahydrodipicolinate binding; the sequence is GT.

This sequence belongs to the DapB family.

The protein localises to the cytoplasm. The catalysed reaction is (S)-2,3,4,5-tetrahydrodipicolinate + NAD(+) + H2O = (2S,4S)-4-hydroxy-2,3,4,5-tetrahydrodipicolinate + NADH + H(+). It catalyses the reaction (S)-2,3,4,5-tetrahydrodipicolinate + NADP(+) + H2O = (2S,4S)-4-hydroxy-2,3,4,5-tetrahydrodipicolinate + NADPH + H(+). It participates in amino-acid biosynthesis; L-lysine biosynthesis via DAP pathway; (S)-tetrahydrodipicolinate from L-aspartate: step 4/4. In terms of biological role, catalyzes the conversion of 4-hydroxy-tetrahydrodipicolinate (HTPA) to tetrahydrodipicolinate. In Afipia carboxidovorans (strain ATCC 49405 / DSM 1227 / KCTC 32145 / OM5) (Oligotropha carboxidovorans), this protein is 4-hydroxy-tetrahydrodipicolinate reductase.